The following is a 375-amino-acid chain: Monocyte differentiation antigen CD14 (375 aa).

The N-terminal stretch at 1 to 19 (MERASCLLLLLLPLVHVSA) is a signal peptide. Disulfide bonds link cysteine 25-cysteine 36 and cysteine 34-cysteine 51. N-linked (GlcNAc...) asparagine glycosylation is present at asparagine 37. LRR repeat units follow at residues 54–82 (AVEV…PRQY), 83–118 (ADTV…YSRL), 119–144 (KELT…GLAL), 145–172 (SSLR…KPGL), 173–196 (KVLS…FPAL), 197–224 (TSLD…FPAI), 225–251 (QNLA…GVQP), 252–278 (HSLD…SSAL), 279–299 (NSLN…PAKL), 300–321 (RVLD…LPEV), and 322–349 (DNLT…SGVV). N-linked (GlcNAc...) asparagine glycosylation is present at asparagine 151. 2 disulfide bridges follow: cysteine 187/cysteine 217 and cysteine 241/cysteine 272. N-linked (GlcNAc...) asparagine glycosylation occurs at asparagine 282. The required for response to bacterial lipopolysaccharide (LPS) stretch occupies residues 290-375 (QVPKGLPAKL…VLLQGARGFA (86 aa)). N-linked (GlcNAc...) asparagine glycosylation is present at asparagine 323. Threonine 336 carries an O-linked (GalNAc...) threonine glycan. Asparagine 345 carries the GPI-anchor amidated asparagine lipid modification. The propeptide at 346 to 375 (SGVVPACARSTLSVGVSGTLVLLQGARGFA) is removed in mature form.

In terms of assembly, interacts with LPS-bound LPB. Belongs to the lipopolysaccharide (LPS) receptor, a multi-protein complex containing at least CD14, LY96 and TLR4. Interacts with LPAR1. Interacts with the TLR2:TLR6 or TLR2:TLR1 heterodimers; upon interaction with ligands such as diacylated lipopeptides and triacylated lipopeptides, respectively. Interacts with MYO18A. Interacts with FSTL1. In terms of processing, N- and O- glycosylated. O-glycosylated with a core 1 or possibly core 8 glycan. In terms of tissue distribution, detected on macrophages (at protein level). Expressed strongly on the surface of monocytes and weakly on the surface of granulocytes; also expressed by most tissue macrophages.

The protein resides in the cell membrane. It is found in the secreted. The protein localises to the membrane raft. It localises to the golgi apparatus. Its function is as follows. Coreceptor for bacterial lipopolysaccharide. In concert with LBP, binds to monomeric lipopolysaccharide and delivers it to the LY96/TLR4 complex, thereby mediating the innate immune response to bacterial lipopolysaccharide (LPS). Acts via MyD88, TIRAP and TRAF6, leading to NF-kappa-B activation, cytokine secretion and the inflammatory response. Acts as a coreceptor for TLR2:TLR6 heterodimer in response to diacylated lipopeptides and for TLR2:TLR1 heterodimer in response to triacylated lipopeptides, these clusters trigger signaling from the cell surface and subsequently are targeted to the Golgi in a lipid-raft dependent pathway. Binds electronegative LDL (LDL(-)) and mediates the cytokine release induced by LDL(-). This Homo sapiens (Human) protein is Monocyte differentiation antigen CD14 (CD14).